Consider the following 335-residue polypeptide: MTEIATTSGISSVGLLSVGAYRPTRVVTNDEICENIDSSDEWIYSRTGIKTRRFAAPEESAASMAIEASREAIAKAALTGSDIDGVIVATSTHFLQTPACAPIVAAALGCQNVPAFDISAGCSGFGHALGIAADMIRGGSAATILVIGTEKLSPTVDMTDRSNCFIFADGAASVLVGHSPIQGIGPTVWGSDGEQAAAIRQDIDWISHAENPAGPRPFLRMEGTAVFRWAAFEMGKVGQQAMDAAGVKPDEIDVFIPHQANSRINELLTKNLQLRPDAVIANDIEHTGNTSAASIPLAMAELLATGAAKPGDLALLIGYGAGLSYAAQVVRMPNS.

Catalysis depends on residues Cys-122 and His-258. The segment at 259-263 is ACP-binding; it reads QANSR. Asn-289 is a catalytic residue.

It belongs to the thiolase-like superfamily. FabH family. As to quaternary structure, homodimer.

It localises to the cytoplasm. It catalyses the reaction malonyl-[ACP] + dodecanoyl-CoA + H(+) = 3-oxotetradecanoyl-[ACP] + CO2 + CoA. The protein operates within lipid metabolism; fatty acid biosynthesis. It functions in the pathway lipid metabolism; mycolic acid biosynthesis. Catalyzes the condensation reaction of fatty acid synthesis by the addition to an acyl acceptor of two carbons from malonyl-ACP. Catalyzes the first condensation reaction which initiates fatty acid synthesis and may therefore play a role in governing the total rate of fatty acid production. Possesses both acetoacetyl-ACP synthase and acetyl transacylase activities. Its substrate specificity determines the biosynthesis of branched-chain and/or straight-chain of fatty acids. The protein is Mycobacterial beta-ketoacyl-[acyl-carrier-protein] synthase III of Mycobacterium marinum (strain ATCC BAA-535 / M).